The sequence spans 265 residues: Orphan methyltransferase M.BamHII (265 aa).

Belongs to the N(4)/N(6)-methyltransferase family. N(4) subfamily.

It carries out the reaction a 2'-deoxycytidine in DNA + S-adenosyl-L-methionine = an N(4)-methyl-2'-deoxycytidine in DNA + S-adenosyl-L-homocysteine + H(+). Its function is as follows. A beta subtype methylase, recognizes the double-stranded sequence 5'-GGATCC-3', methylates C-? on both strands. No endonuclease has been identified for this methylase, although it is speculated it might protect against BamHI. The protein is Orphan methyltransferase M.BamHII (bamHIIM) of Bacillus amyloliquefaciens (Bacillus velezensis).